We begin with the raw amino-acid sequence, 40 residues long: U2-ctenitoxin-Pr1a (40 aa).

4 cysteine pairs are disulfide-bonded: Cys2–Cys17, Cys9–Cys22, Cys16–Cys32, and Cys24–Cys30.

Expressed by the venom gland.

It localises to the secreted. Functionally, neurotoxin. The sequence is that of U2-ctenitoxin-Pr1a from Phoneutria reidyi (Brazilian Amazonian armed spider).